We begin with the raw amino-acid sequence, 530 residues long: Pre-mRNA-splicing factor PRP9 (530 aa).

Residues 280–310 (IYCPFCSRWFKTSSVFESHLVGKIHKKNESK) form a Matrin-type 1 zinc finger. The interval 367-388 (DSTEKEGAEQVDGEQRDGQLQE) is disordered. Residues 368–388 (STEKEGAEQVDGEQRDGQLQE) are compositionally biased toward basic and acidic residues. The segment at 421-452 (YRCEICSNKVYNGRRTFERHFNEERHIYHLRC) adopts a Matrin-type 2 zinc-finger fold. The segment at 488-516 (AVPPKPNPSQLKVPTELELEEEDEEGNVM) is disordered. Positions 504–513 (LELEEEDEEG) are enriched in acidic residues.

The protein belongs to the SF3A3 family. As to quaternary structure, belongs to the CWC complex (or CEF1-associated complex), a spliceosome sub-complex reminiscent of a late-stage spliceosome composed of the U2, U5 and U6 snRNAs and at least BUD13, BUD31, BRR2, CDC40, CEF1, CLF1, CUS1, CWC2, CWC15, CWC21, CWC22, CWC23, CWC24, CWC25, CWC27, ECM2, HSH155, IST3, ISY1, LEA1, MSL1, NTC20, PRP8, PRP9, PRP11, PRP19, PRP21, PRP22, PRP45, PRP46, SLU7, SMB1, SMD1, SMD2, SMD3, SMX2, SMX3, SNT309, SNU114, SPP2, SYF1, SYF2, RSE1 and YJU2.

Its subcellular location is the nucleus. Its function is as follows. mRNA splicing factors, PRP9, PRP11, and PRP21, are necessary for binding of the U2 snRNP to the pre-mRNA in an early step of spliceosome assembly. In Saccharomyces cerevisiae (strain ATCC 204508 / S288c) (Baker's yeast), this protein is Pre-mRNA-splicing factor PRP9 (PRP9).